The sequence spans 169 residues: Photosystem I assembly protein Ycf3 (169 aa).

TPR repeat units follow at residues 35 to 68 (AFTY…EIDP), 72 to 105 (SYIL…NPSL), and 120 to 153 (GEQA…APGN).

This sequence belongs to the Ycf3 family.

Its subcellular location is the plastid. It localises to the chloroplast thylakoid membrane. In terms of biological role, essential for the assembly of the photosystem I (PSI) complex. May act as a chaperone-like factor to guide the assembly of the PSI subunits. This Huperzia lucidula (Shining clubmoss) protein is Photosystem I assembly protein Ycf3.